The following is a 626-amino-acid chain: Alpha terpineol synthase, chloroplastic (626 aa).

The N-terminal 38 residues, 1–38 (MALLSVAPLASKSRLHKTLITSAHHLKPSPTTIPTLPV), are a transit peptide targeting the chloroplast. The Mg(2+) site is built by Asp-377, Asp-381, and Asp-529. Residues 377-381 (DDIYD) carry the DDXXD motif motif.

The protein belongs to the terpene synthase family. Tpsd subfamily. Mg(2+) serves as cofactor. It depends on Mn(2+) as a cofactor.

The protein localises to the plastid. It localises to the chloroplast. It carries out the reaction (2E)-geranyl diphosphate + H2O = (S)-alpha-terpineol + diphosphate. The catalysed reaction is (2E)-geranyl diphosphate + H2O = (R)-alpha-terpineol + diphosphate. The enzyme catalyses (2E)-geranyl diphosphate + H2O = (2E)-geraniol + diphosphate. It catalyses the reaction (2E)-geranyl diphosphate = terpinolene + diphosphate. It carries out the reaction (2E)-geranyl diphosphate = (4S)-limonene + diphosphate. Its pathway is terpene metabolism; oleoresin biosynthesis. It participates in secondary metabolite biosynthesis; terpenoid biosynthesis. In terms of biological role, monoterpene synthase (TPS) involved in the biosynthesis of monoterpene natural products included in conifer oleoresin secretions and volatile emissions; these compounds contribute to biotic and abiotic stress defense against herbivores and pathogens. Catalyzes the conversion of (2E)-geranyl diphosphate (GPP) to (-)-alpha-terpineol, (+)-alpha-terpineol and terpin-4-ol, and, to a lower extent, to geraniol, terpinolene and (-)-limonene. This chain is Alpha terpineol synthase, chloroplastic, found in Pinus banksiana (Jack pine).